A 590-amino-acid chain; its full sequence is Probable metalloendopeptidase G1-type (590 aa).

A Zn(2+)-binding site is contributed by histidine 41. Residue glutamate 44 is part of the active site. Histidine 45 lines the Zn(2+) pocket.

Belongs to the peptidase M44 family. Zn(2+) is required as a cofactor.

In terms of biological role, seems to be involved in viral proteins maturation by cleavage at Ala-Gly-|-Xaa motifs. This chain is Probable metalloendopeptidase G1-type (GP045L), found in Oryctolagus cuniculus (Rabbit).